Consider the following 583-residue polypeptide: MSFRLFTRTSQRLPRLNWVSPIRRYAKQPQYDEAELFAENINHGAYKAKKRPSDEHFQWPEKSPDQITKESELQWERMAKLSAVGQGILILVVVGGLGTAYLRWPELKSWWLIKMNGGRINATQEQSGQDSLEKLIRQKAKNLLREIPQVPAFQLGIDHPGVYIWGRCHSKDSLFPVRVPNLDGRKFRDILLAPSDDFNTNFAIDEKGDLISWDDLGQTKTILPDQDLTSMKYSSHFLYALNKKGEILVIPIRTPDLIASQVSSRRSKLLPWKTKLRYDWKLQTNQIFNGKEGEKRVVQFDAGSHHLVLLSNLGKAYCCATGNDQKQAQVSKGQFGIPTFSQFDEFPPNNQLFEIELLNKFKHEGEDVVRKREIKKIACGSYHTLAIDKTGEIYAFGWNRFGQLALPISYNLEYVSFPRSVTHAFKPHFPGMTNWKCVDIHCDDETSFVTIRKPGSTSDHHYFAFGNGLFGELGNNTFKNSQCDPIKIKSDDKKLTNWSCGSHCVFTETEQENEVIAWGNNDHGQLGIGKKTMKCAKPMNIPEVLKPGQDTTDLDSIYNSKLHLKKEQRVVTNGNKSCLYWRV.

The N-terminal 25 residues, 1 to 25 (MSFRLFTRTSQRLPRLNWVSPIRRY), are a transit peptide targeting the mitochondrion. A helical membrane pass occupies residues 83 to 105 (AVGQGILILVVVGGLGTAYLRWP). RCC1 repeat units lie at residues 332–389 (KGQF…AIDK), 390–452 (TGEI…VTIR), 459–510 (DHHY…TETE), and 512–569 (ENEV…KEQR).

The protein localises to the mitochondrion membrane. This Saccharomyces cerevisiae (strain ATCC 204508 / S288c) (Baker's yeast) protein is Protein FMP25, mitochondrial (FMP25).